The sequence spans 181 residues: MDQQLKAVSKFLSYILRHRPEAISLELNAGGWAAISELIQCASKHDHFLSEEIIKEVVVSNDKKRFKLSEDGQYIRANQGHSIRVDLDLLPLTPPDVLFHGTATRFLASIMAKGLLPSGRQHVHLSASYETAIAVGRRHGKPTVLEINAQKMQGDGYLFYRSENGVWLTDHVPAQYFVEVE.

This sequence belongs to the KptA/TPT1 family.

In terms of biological role, removes the 2'-phosphate from RNA via an intermediate in which the phosphate is ADP-ribosylated by NAD followed by a presumed transesterification to release the RNA and generate ADP-ribose 1''-2''-cyclic phosphate (APPR&gt;P). May function as an ADP-ribosylase. In Acaryochloris marina (strain MBIC 11017), this protein is Probable RNA 2'-phosphotransferase.